The primary structure comprises 767 residues: Pyrin (767 aa).

Positions 1–92 (MAKTLGDHLL…AEELRKATGT (92 aa)) constitute a Pyrin domain. The interval 94-219 (HLIEENRVGG…LQGLYNNAPG (126 aa)) is disordered. Composition is skewed to polar residues over residues 126-142 (GTQQ…SSQA), 165-176 (LDSQTKPWTRST), and 183-208 (TQGT…SSAG). Ser241 is modified (phosphoserine). The segment at 311–346 (TSLIGEERCPTSWTENGNGSPETTESSGETAGSILS) is disordered. Polar residues predominate over residues 321–340 (TSWTENGNGSPETTESSGET). A B box-type zinc finger spans residues 439-481 (QSLPQCPRHMKQVLLLFCEDHREPICLICRLSLEHQGHRVRPI). Zn(2+) is bound by residues Cys444, His447, Cys467, and His473. A coiled-coil region spans residues 481–510 (IEEAALEYKEQIREQLERLREMRGYVEEHR). Residues 489–647 (KEQIREQLER…CFSEMLSSEM (159 aa)) are required for homotrimerization and induction of pyroptosomes. The disordered stretch occupies residues 697-719 (GGSEPKDYLHPQPAQDTPELHEI).

In terms of assembly, homotrimer. Interacts (via the B box-type zinc finger) with PSTPIP1. Interacts (via the B30.2/SPRY domain) with several components of the inflammasome complex, including CASP1 p20 and p10 subunits, CASP5, PYCARD, NLRP1, NLRP2 and NLRP3, as well as with unprocessed IL1B; this interaction may lead to autophagic degradation of these proteins. Component of the AIM2 PANoptosome complex, a multiprotein complex that drives inflammatory cell death (PANoptosis). Interacts with NFKBIA and RELA. Interacts weakly with VASP and ACTR3. Interacts with active ULK1 (phosphorylated on 'Ser-317') and BECN1 simultaneously. Also interacts with ATG16L1 (via WD repeats), and with ATG8 family members, including GABARAP, GABARAPL1 and, to a lesser extent, GABARAPL2, MAP1LC3A/LC3A and MAP1LC3C/LC3C. Interacts with TRIM21. Interacts with YWHAB, YWHAE, YWHAG, YWHAH, YWHAQ and YWHAZ; the interaction is required for the down-regulation of pyrin pro-inflammatory activity. Phosphorylation at Ser-241 is required for the interaction with 14-3-3 proteins and down-regulation of pyrin pro-inflammatory activity. Post-translationally, degraded along with the delivery of its substrates to autolysosomal compartments (at protein level). Expressed in spleen peripheral blood granulocytes. Not expressed in lymphocytes, thymus, testis, ovary, heart, brain, lung, liver, kidney and muscle.

Its subcellular location is the cytoplasm. It localises to the cytoskeleton. The protein localises to the cell projection. It is found in the ruffle. The protein resides in the lamellipodium. Its subcellular location is the cytoplasmic vesicle. It localises to the autophagosome. The protein localises to the nucleus. Involved in the regulation of innate immunity and the inflammatory response in response to IFNG/IFN-gamma. Organizes autophagic machinery by serving as a platform for the assembly of ULK1, Beclin 1/BECN1, ATG16L1, and ATG8 family members and recognizes specific autophagy targets, thus coordinating target recognition with assembly of the autophagic apparatus and initiation of autophagy. Acts as an autophagy receptor for the degradation of several inflammasome components, including CASP1, NLRP1 and NLRP3, hence preventing excessive IL1B- and IL18-mediated inflammation. However, it can also have a positive effect in the inflammatory pathway, acting as an innate immune sensor that triggers PYCARD/ASC specks formation, caspase-1 activation, and IL1B and IL18 production. Together with AIM2, also acts as a mediator of pyroptosis, necroptosis and apoptosis (PANoptosis), an integral part of host defense against pathogens, in response to bacterial infection. It is required for PSTPIP1-induced PYCARD/ASC oligomerization and inflammasome formation. Recruits PSTPIP1 to inflammasomes, and is required for PSTPIP1 oligomerization. In Mus musculus (Mouse), this protein is Pyrin.